We begin with the raw amino-acid sequence, 318 residues long: uncharacterized protein (318 aa).

2 helical membrane-spanning segments follow: residues 230–250 and 264–284; these read VWTY…SFLI and ASLM…LGVI.

The protein belongs to the glycosyltransferase 2 family. GtrB subfamily.

Its subcellular location is the cell membrane. This is an uncharacterized protein from Synechocystis sp. (strain ATCC 27184 / PCC 6803 / Kazusa).